Consider the following 426-residue polypeptide: Phosphomethylpyrimidine synthase (426 aa).

Residues Asn65, Met94, Tyr123, His162, 184–186 (SRG), 225–228 (DGMR), and Glu264 contribute to the substrate site. Position 268 (His268) interacts with Zn(2+). Tyr291 contributes to the substrate binding site. A Zn(2+)-binding site is contributed by His332. [4Fe-4S] cluster contacts are provided by Cys408, Cys411, and Cys415.

This sequence belongs to the ThiC family. [4Fe-4S] cluster is required as a cofactor.

The enzyme catalyses 5-amino-1-(5-phospho-beta-D-ribosyl)imidazole + S-adenosyl-L-methionine = 4-amino-2-methyl-5-(phosphooxymethyl)pyrimidine + CO + 5'-deoxyadenosine + formate + L-methionine + 3 H(+). It participates in cofactor biosynthesis; thiamine diphosphate biosynthesis. Catalyzes the synthesis of the hydroxymethylpyrimidine phosphate (HMP-P) moiety of thiamine from aminoimidazole ribotide (AIR) in a radical S-adenosyl-L-methionine (SAM)-dependent reaction. In Methanococcus aeolicus (strain ATCC BAA-1280 / DSM 17508 / OCM 812 / Nankai-3), this protein is Phosphomethylpyrimidine synthase.